Consider the following 279-residue polypeptide: MTEHMRIPLAGVIGSPIAHSRSPALHGYWLKRYGLKGHYIPMDVAQADLREVLAAMPRMGFVGCNVTIPHKETVIALADIVTDRAALIGAANTLIFRKDGKIHADNTDGAGFTANLRQNAPDWQPQAAPAVVWGAGGAARAVIAALIEVGVPEIRLSNRSRARADALRSDFGAKVQVFDWVQAGNILEDATTVVNTTSLGMIGKPDFRVPLDALSPKAVVTDLVYTPLRTRLLAEAEAAGCRTVDGLGMLLHQAAPGFERWFGVRPEVDEDTRAAVLAT.

Shikimate-binding positions include 20-22 (SRS) and T67. K71 serves as the catalytic Proton acceptor. An NADP(+)-binding site is contributed by D83. Residues N92 and D108 each coordinate shikimate. NADP(+) contacts are provided by residues 134-138 (GAGGA) and L223. Y225 contacts shikimate. G246 contacts NADP(+).

This sequence belongs to the shikimate dehydrogenase family. In terms of assembly, homodimer.

It catalyses the reaction shikimate + NADP(+) = 3-dehydroshikimate + NADPH + H(+). Its pathway is metabolic intermediate biosynthesis; chorismate biosynthesis; chorismate from D-erythrose 4-phosphate and phosphoenolpyruvate: step 4/7. Its function is as follows. Involved in the biosynthesis of the chorismate, which leads to the biosynthesis of aromatic amino acids. Catalyzes the reversible NADPH linked reduction of 3-dehydroshikimate (DHSA) to yield shikimate (SA). The polypeptide is Shikimate dehydrogenase (NADP(+)) (Cereibacter sphaeroides (strain ATCC 17025 / ATH 2.4.3) (Rhodobacter sphaeroides)).